The sequence spans 456 residues: Protein king tubby (456 aa).

The disordered stretch occupies residues histidine 111–glycine 202. The segment covering proline 120 to aspartate 152 has biased composition (polar residues). Phosphoserine is present on serine 149.

The protein belongs to the TUB family.

It is found in the cytoplasm. It localises to the nucleus. The protein resides in the cell projection. Its subcellular location is the cilium membrane. The protein localises to the rhabdomere. This chain is Protein king tubby, found in Drosophila pseudoobscura pseudoobscura (Fruit fly).